We begin with the raw amino-acid sequence, 287 residues long: Prepilin leader peptidase/N-methyltransferase (287 aa).

Transmembrane regions (helical) follow at residues 10 to 30 (LGFP…NVVI), 101 to 121 (ISIQ…ASVW), 125 to 145 (FGWQ…MSGI), 177 to 197 (KPAL…WWLF), 226 to 246 (ILPI…IWLF), and 253 to 273 (ATPI…FFWG).

This sequence belongs to the peptidase A24 family.

Its subcellular location is the cell inner membrane. The enzyme catalyses Typically cleaves a -Gly-|-Phe- bond to release an N-terminal, basic peptide of 5-8 residues from type IV prepilin, and then N-methylates the new N-terminal amino group, the methyl donor being S-adenosyl-L-methionine.. Its function is as follows. Plays an essential role in type IV pili and type II pseudopili formation by proteolytically removing the leader sequence from substrate proteins and subsequently monomethylating the alpha-amino group of the newly exposed N-terminal phenylalanine. The polypeptide is Prepilin leader peptidase/N-methyltransferase (xpsO) (Xanthomonas campestris pv. campestris (strain ATCC 33913 / DSM 3586 / NCPPB 528 / LMG 568 / P 25)).